Reading from the N-terminus, the 1932-residue chain is DOCK-like protein 1 (1932 aa).

Positions 1410–1824 (LLEANRPELF…EIERYSRTLS (415 aa)) constitute a DOCKER domain. A compositionally biased stretch (polar residues) spans 1908 to 1921 (STFLAGSQPNTNTD). The tract at residues 1908 to 1932 (STFLAGSQPNTNTDSQHKHDYSHSG) is disordered. The span at 1922–1932 (SQHKHDYSHSG) shows a compositional bias: basic and acidic residues.

The protein belongs to the DOCK family. As to quaternary structure, forms an active heterodimer with LMO1.

The protein localises to the cytoplasm. The protein resides in the mitochondrion. Functionally, forms a transiant heterodimeric complex with LMO1, that acts as a guanine nucleotide exchange factor exchange factor (GEF) for the small GTPase RHO5. DCK1, LMO1 and RHO5 relocate to mitochondria upon oxidative stress and trigger cell death. The DCK1/LMO1/RHO5 signaling module mediates mitochondrial turnover under nitrogen starvation conditions via mitophagy. The DCK1/LMO1/RHO5 signaling module plays also a function in cell wall integrity signaling. The protein is DOCK-like protein 1 of Saccharomyces cerevisiae (strain ATCC 204508 / S288c) (Baker's yeast).